Reading from the N-terminus, the 56-residue chain is Protein hunchback (56 aa).

C2H2-type zinc fingers lie at residues 1–5 (HLRNH), 11–33 (FKCDKCSYSCVNKSMLNSHLKSH), and 39–56 (FRCSDCAYATKYCHSLKL).

Belongs to the hunchback C2H2-type zinc-finger protein family.

It localises to the nucleus. Functionally, gap class segmentation protein that controls development of head structures. This is Protein hunchback (hb) from Euscelis plebejus (Leafhopper).